Consider the following 379-residue polypeptide: MTSYNPASPDFPFTLGIEEEYQVVDPQTRELRSYITQILDRGRMILREQIKPELHQSMVEVGTQPCRTIQEARAEVVRLRGTIAGLARQHGLTIISAGTHPISSWMSQEITPFERYKGVVEEMQQLALQLLIFGMHVHVGMPDDEVAIELMNVARYFLPHILALSTSSPFWMGRNTGFKSYRSALFSNFPRTGIPPSFHSAAEFQNYVKLLIKTNCIDDAKKIYWDLRPHPYFGTLEFRVCDAATRVDECIALAALMQALVVKLHLMFSENTTFRVYRRAVIMENKWRAQRWGLDGKLIDFGKRAEVEAKALMHELVAFVDEVVDELGSRHEVEYLLNVADGGSSADRQLAVFRETNDLHAVVDNLIVETLEGVPVYQG.

It belongs to the glutamate--cysteine ligase type 2 family. YbdK subfamily.

It carries out the reaction L-cysteine + L-glutamate + ATP = gamma-L-glutamyl-L-cysteine + ADP + phosphate + H(+). Functionally, ATP-dependent carboxylate-amine ligase which exhibits weak glutamate--cysteine ligase activity. This Roseiflexus castenholzii (strain DSM 13941 / HLO8) protein is Putative glutamate--cysteine ligase 2.